The sequence spans 354 residues: UPF0425 pyridoxal phosphate-dependent protein MMP0002 (354 aa).

Position 210 is an N6-(pyridoxal phosphate)lysine (K210).

Belongs to the UPF0425 family. It depends on pyridoxal 5'-phosphate as a cofactor.

This chain is UPF0425 pyridoxal phosphate-dependent protein MMP0002, found in Methanococcus maripaludis (strain DSM 14266 / JCM 13030 / NBRC 101832 / S2 / LL).